Here is a 501-residue protein sequence, read N- to C-terminus: GMP synthase [glutamine-hydrolyzing] (501 aa).

Residues 1-185 enclose the Glutamine amidotransferase type-1 domain; the sequence is MVLVVDYGSQ…LFNVCKLEKN (185 aa). Cys-75 serves as the catalytic Nucleophile. Residues His-159 and Glu-161 contribute to the active site. Residues 186-376 enclose the GMPS ATP-PPase domain; the sequence is WKIGDLVEEK…LGIPDRIINR (191 aa). 213–219 provides a ligand contact to ATP; that stretch reads SGGVDSS.

In terms of assembly, homodimer.

It catalyses the reaction XMP + L-glutamine + ATP + H2O = GMP + L-glutamate + AMP + diphosphate + 2 H(+). Its pathway is purine metabolism; GMP biosynthesis; GMP from XMP (L-Gln route): step 1/1. Catalyzes the synthesis of GMP from XMP. The sequence is that of GMP synthase [glutamine-hydrolyzing] from Thermotoga petrophila (strain ATCC BAA-488 / DSM 13995 / JCM 10881 / RKU-1).